Here is a 425-residue protein sequence, read N- to C-terminus: Melibiose permease (425 aa).

Over 1–13 (MNTTTCTHKDNPN) the chain is Cytoplasmic. The helical transmembrane segment at 14-34 (FWIFGLFFFLYFFIMATCFPF) threads the bilayer. The Periplasmic portion of the chain corresponds to 35-50 (LPIWLSDIIGLNKTHT). A helical transmembrane segment spans residues 51-71 (GIVFSCISLSAIAFQPVLGVI). Over 72-80 (SDKLGLKKH) the chain is Cytoplasmic. The chain crosses the membrane as a helical span at residues 81–101 (LLWIISVLLFLFAPFFLYVFA). At 102–107 (PLLKTN) the chain is on the periplasmic side. The chain crosses the membrane as a helical span at residues 108-128 (IWLGALSGGLYIGFVFSAGSG). Topologically, residues 129–149 (AIEAYIERVSRNSAFEYGKAR) are cytoplasmic. A helical transmembrane segment spans residues 150 to 170 (MFGCLGWGLCASTGGILFGID). Pro-171 is a topological domain (periplasmic). A helical membrane pass occupies residues 172–192 (SYVFWMGSAAALLLMLLLVVA). Topologically, residues 193–227 (KPKPNQTAQVMNALGANQPQITAKKVFNLFRQRRM) are cytoplasmic. Residues 228–248 (WMFILYVIGVACVYDVFDQQF) form a helical membrane-spanning segment. Topologically, residues 249-267 (ATFFKTFFATPQEGTRAFG) are periplasmic. A helical membrane pass occupies residues 268-288 (FATTAGEICNAIIMFCSPWII). The Cytoplasmic segment spans residues 289-297 (NRIGAKNTL). A helical transmembrane segment spans residues 298 to 318 (LIAGLIMATRIIGSSFATTAV). Topologically, residues 319–325 (EVIALKM) are periplasmic. A helical transmembrane segment spans residues 326-346 (LHALEVPFLLVGAFKYITGVF). The Cytoplasmic portion of the chain corresponds to 347-353 (DTRLSAT). The chain crosses the membrane as a helical span at residues 354-374 (IYLIGFQFAKQSAAIFLSAFA). Residues 375-385 (GNMYDRIGFQE) lie on the Periplasmic side of the membrane. The chain crosses the membrane as a helical span at residues 386 to 406 (TYLMLGCFVLAITVVSAFTLS). Over 407 to 425 (SRQEIAAAAGAAALTSQSR) the chain is Cytoplasmic.

It belongs to the major facilitator superfamily. Oligosaccharide:H(+) symporter (OHS) (TC 2.A.1.5) family.

It is found in the cell inner membrane. Responsible for transport of melibiose into the cell, with the concomitant import of a proton (symport system). Can also transport lactose, and has weak activity with maltose. Cannot transport the analog methyl-1-thio-beta,D-galactopyranoside (TMG). The polypeptide is Melibiose permease (Enterobacter cloacae subsp. cloacae (strain ATCC 13047 / DSM 30054 / NBRC 13535 / NCTC 10005 / WDCM 00083 / NCDC 279-56)).